We begin with the raw amino-acid sequence, 199 residues long: Probable GTP-binding protein EngB (199 aa).

The EngB-type G domain occupies 28–199 (DLPEIALAGR…DSWDAILEQV (172 aa)). GTP is bound by residues 36–43 (GRSNVGKS), 63–67 (GKTQL), 81–84 (DVPG), 148–151 (TKAD), and 180–182 (FSS). Positions 43 and 65 each coordinate Mg(2+).

Belongs to the TRAFAC class TrmE-Era-EngA-EngB-Septin-like GTPase superfamily. EngB GTPase family. Mg(2+) is required as a cofactor.

Functionally, necessary for normal cell division and for the maintenance of normal septation. The protein is Probable GTP-binding protein EngB of Streptococcus pyogenes serotype M6 (strain ATCC BAA-946 / MGAS10394).